The sequence spans 395 residues: Mevalonate kinase (395 aa).

ATP contacts are provided by residues lysine 13, asparagine 55, asparagine 104, serine 135, and 140–146 (GAGLGSS). The Proton donor role is filled by serine 146. Mg(2+) contacts are provided by serine 146 and glutamate 193. Aspartate 204 (proton acceptor) is an active-site residue.

The protein belongs to the GHMP kinase family. Mevalonate kinase subfamily. In terms of assembly, homodimer. Requires Mg(2+) as cofactor.

The protein localises to the cytoplasm. Its subcellular location is the peroxisome. It carries out the reaction (R)-mevalonate + ATP = (R)-5-phosphomevalonate + ADP + H(+). The protein operates within isoprenoid biosynthesis; isopentenyl diphosphate biosynthesis via mevalonate pathway; isopentenyl diphosphate from (R)-mevalonate: step 1/3. Farnesyl pyrophosphate and geranyl pyrophosphate inhibit mevalonate kinase activity by binding competitively at the ATP-binding sites. Catalyzes the phosphorylation of mevalonate to mevalonate 5-phosphate, a key step in isoprenoid and cholesterol biosynthesis. The polypeptide is Mevalonate kinase (Mus musculus (Mouse)).